Reading from the N-terminus, the 226-residue chain is Ribonuclease 3 (226 aa).

An RNase III domain is found at 2–129 (IESISKIIKY…LIGAIYLDGG (128 aa)). A Mg(2+)-binding site is contributed by Glu42. Residue Asp46 is part of the active site. Positions 115 and 118 each coordinate Mg(2+). Glu118 is a catalytic residue. Residues 154–223 (DAKTILQELV…ASLMLNQIHN (70 aa)) enclose the DRBM domain.

The protein belongs to the ribonuclease III family. As to quaternary structure, homodimer. Mg(2+) is required as a cofactor.

The protein resides in the cytoplasm. It carries out the reaction Endonucleolytic cleavage to 5'-phosphomonoester.. Digests double-stranded RNA. Involved in the processing of primary rRNA transcript to yield the immediate precursors to the large and small rRNAs (23S and 16S). Processes some mRNAs, and tRNAs when they are encoded in the rRNA operon. Processes pre-crRNA and tracrRNA of type II CRISPR loci if present in the organism. The polypeptide is Ribonuclease 3 (Ehrlichia chaffeensis (strain ATCC CRL-10679 / Arkansas)).